Here is a 271-residue protein sequence, read N- to C-terminus: Rhomboid-type serine protease 2 (271 aa).

Transmembrane regions (helical) follow at residues 16–36, 64–84, 89–111, 115–137, 152–172, and 176–196; these read GLAV…NLVY, HLSF…IVMF, GTLY…YCLI, LFPN…YFAV, FSFP…LLAP, and LPGH…ENWV. Ser-125 acts as the Nucleophile in catalysis. The active site involves His-179. A disordered region spans residues 252–271; it reads HNTDTPAEPTFQGNGRVLGN.

This sequence belongs to the peptidase S54 family.

The protein resides in the golgi apparatus membrane. Its subcellular location is the golgi apparatus. It is found in the cis-Golgi network membrane. It catalyses the reaction Cleaves type-1 transmembrane domains using a catalytic dyad composed of serine and histidine that are contributed by different transmembrane domains.. Probable rhomboid-type serine protease that catalyzes intramembrane proteolysis. The polypeptide is Rhomboid-type serine protease 2 (RBD2) (Kluyveromyces lactis (strain ATCC 8585 / CBS 2359 / DSM 70799 / NBRC 1267 / NRRL Y-1140 / WM37) (Yeast)).